The following is a 123-amino-acid chain: Small ribosomal subunit protein eS8 (123 aa).

The tract at residues 1–37 (MKDQGRSTRKRTGGRLKHASNKKRHQLGREPAETTVG) is disordered. The segment covering 7–26 (STRKRTGGRLKHASNKKRHQ) has biased composition (basic residues).

Belongs to the eukaryotic ribosomal protein eS8 family. Part of the 30S ribosomal subunit.

This Halorubrum lacusprofundi (strain ATCC 49239 / DSM 5036 / JCM 8891 / ACAM 34) protein is Small ribosomal subunit protein eS8.